Reading from the N-terminus, the 278-residue chain is Large ribosomal subunit protein uL2 (278 aa).

The tract at residues 222-278 (GVVMNPIDHPHGGGEGRTSGGRHPVTPWGKPTKGKKTRSNKSTDKFILISRHKRKKK) is disordered.

This sequence belongs to the universal ribosomal protein uL2 family. In terms of assembly, part of the 50S ribosomal subunit. Forms a bridge to the 30S subunit in the 70S ribosome.

One of the primary rRNA binding proteins. Required for association of the 30S and 50S subunits to form the 70S ribosome, for tRNA binding and peptide bond formation. It has been suggested to have peptidyltransferase activity; this is somewhat controversial. Makes several contacts with the 16S rRNA in the 70S ribosome. The polypeptide is Large ribosomal subunit protein uL2 (Rhodopseudomonas palustris (strain BisB5)).